The sequence spans 293 residues: Hydroxyquinol 1,2-dioxygenase (293 aa).

The Fe cation site is built by Tyr164, Tyr197, His221, and His223.

The protein belongs to the intradiol ring-cleavage dioxygenase family. As to quaternary structure, homodimer. It depends on Fe(3+) as a cofactor.

It carries out the reaction benzene-1,2,4-triol + O2 = maleylacetate + 2 H(+). The protein operates within aromatic compound metabolism; beta-ketoadipate pathway; 3-oxoadipate from 3,4-dihydroxybenzoate: step 2/4. With respect to regulation, inhibited by 3,5-dichlorocatechol, chlorohydroquinone and 4,5-dibromocatechol. Functionally, catalyzes the ortho-cleavage of the aromatic ring of hydroxyquinol. This chain is Hydroxyquinol 1,2-dioxygenase (chqB), found in Nocardioides simplex (Arthrobacter simplex).